The primary structure comprises 1041 residues: Protein EGT2 (1041 aa).

An N-terminal signal peptide occupies residues 1-20 (MNKLLLHLVRVISILGLANA). N-linked (GlcNAc...) asparagine glycosylation is found at Asn65, Asn103, Asn161, Asn175, Asn249, Asn332, Asn401, Asn435, Asn465, Asn485, Asn506, Asn526, Asn544, and Asn556. A disordered region spans residues 388 to 410 (SSSSISLSAPSSSNSTFTTPSSS). The stretch at 457 to 492 (SSTLSYTSNVTISVSSATQHTTTPSYVSNSTTLSSS) is repeat 1. The interval 457–962 (SSTLSYTSNV…TLKTSTFQKA (506 aa)) is 9 X approximate repeats. Repeat copies occupy residues 577–606 (TVAS…ISTI) and 613–647 (SGTD…INTN). Residues Asn635, Asn636, Asn657, and Asn709 are each glycosylated (N-linked (GlcNAc...) asparagine). Repeat 4 spans residues 716-745 (TDKSDTYSVISSTESAQVTEYDSLLPISTL). N-linked (GlcNAc...) asparagine glycosylation is present at Asn756. Tandem repeats lie at residues 773–802 (TDKG…ISTL), 811–840 (TDES…ISTL), 849–886 (TGES…TSLS), 887–924 (TEES…TSLS), and 925–962 (TEES…FQKA). Residue Gly1020 is the site of GPI-anchor amidated glycine attachment. The propeptide at 1021–1041 (AAGQLTIRIGSLLLGLISFLL) is removed in mature form.

Post-translationally, the GPI-anchor is attached to the protein in the endoplasmic reticulum and serves to target the protein to the cell surface. There, the glucosamine-inositol phospholipid moiety is cleaved off and the GPI-modified mannoprotein is covalently attached via its lipidless GPI glycan remnant to the 1,6-beta-glucan of the outer cell wall layer.

The protein localises to the secreted. Its subcellular location is the cell wall. It is found in the membrane. In terms of biological role, seems to be involved in the correct timing of cell separation after cytokinesis, as separation of mutant daughter cells is delayed. Could either be an enzyme necessary for glucans-degradation of the cell wall at the neck region between mother and daughter cells or a regulatory protein controlling this metabolic step. The polypeptide is Protein EGT2 (EGT2) (Saccharomyces cerevisiae (strain ATCC 204508 / S288c) (Baker's yeast)).